The following is a 540-amino-acid chain: MDSRRSLLVLALLFISFLVYEQWQMDYNTPKPVATEQAQAVSSNAEMPASTSSTEGTVDNVAQGKIISIQNDVFTLKVDTLGGDVVESSLTNYAAELNSDARFILLQNKPNEVYVAQSGLIGKNGIDTKAGRAAYQVEAEQFTLADGQNELRVPLTLEKDGVIYRKVFVIKAGSYDIEVNYEIQNQTNEAIEVQPYGQLKHTLVQSSGSMAMPTYTGGAYSSADTNYKKYSFDEMKDKNLSIDTKAGWVAVLQHYFVSAWIPNQDADNQLYTSTANGLGFIGYRGPVVNVPAGGSETIKSALWTGPKLQNEMGAVANHLDLTVDYGWAWFIAKPLFWLLNVIQSIVSNWGLAIIGVTIVVKGILYPLTKAQYTSMAKMRMLQPKLQEMRERFGDDRQRMSQEMMKLYKEEKVNPLGGCLPLLIQMPIFIALYWTFMEAVELRHAPFFGWIQDLSAQDPYYILPILMGASMFLLQKMSPTPVADPMQQKIMNFMPLIFMVFFLWFPAGLVLYWLVSNIITIVQQQLIYRGLEKKGLHSRKK.

5 consecutive transmembrane segments (helical) span residues 7-27, 345-365, 415-435, 453-473, and 494-514; these read LLVL…QMDY, IVSN…GILY, LGGC…YWTF, LSAQ…MFLL, and PLIF…YWLV.

This sequence belongs to the OXA1/ALB3/YidC family. Type 1 subfamily. In terms of assembly, interacts with the Sec translocase complex via SecD. Specifically interacts with transmembrane segments of nascent integral membrane proteins during membrane integration.

The protein resides in the cell inner membrane. Required for the insertion and/or proper folding and/or complex formation of integral membrane proteins into the membrane. Involved in integration of membrane proteins that insert both dependently and independently of the Sec translocase complex, as well as at least some lipoproteins. Aids folding of multispanning membrane proteins. The sequence is that of Membrane protein insertase YidC from Mannheimia succiniciproducens (strain KCTC 0769BP / MBEL55E).